The following is a 439-amino-acid chain: Probable serine/threonine-protein kinase WNK6 (439 aa).

The interval 1–30 (MMPPKPAAEDVADEQPEPPDEDPDVAEADP) is disordered. A compositionally biased stretch (acidic residues) spans 10–27 (DVADEQPEPPDEDPDVAE). The Protein kinase domain occupies 35–293 (LRYREIIGSG…ASELLKSPFL (259 aa)). ATP is bound by residues 116-119 (TELF) and lysine 166. The active-site Proton acceptor is the aspartate 183.

It belongs to the protein kinase superfamily. Ser/Thr protein kinase family. WNK subfamily.

It catalyses the reaction L-seryl-[protein] + ATP = O-phospho-L-seryl-[protein] + ADP + H(+). The catalysed reaction is L-threonyl-[protein] + ATP = O-phospho-L-threonyl-[protein] + ADP + H(+). This chain is Probable serine/threonine-protein kinase WNK6 (WNK6), found in Oryza sativa subsp. japonica (Rice).